We begin with the raw amino-acid sequence, 191 residues long: GDP-mannose pyrophosphatase (191 aa).

GDP-alpha-D-mannose is bound by residues Tyr17, 38–40, Arg67, and 85–87; these read KRE and AGL. In terms of domain architecture, Nudix hydrolase spans 43 to 180; it reads DRGNGATILL…EIRDGKTVLL (138 aa). Residues Ala85, Glu100, and Glu104 each contribute to the Mg(2+) site. Residues 86 to 106 carry the Nudix box motif; that stretch reads GLLDNDEPEVCIRKEAIEETG. GDP-alpha-D-mannose-binding positions include Glu104, Glu127, 150–151, and Lys176; that span reads DE. Glu151 contributes to the Mg(2+) binding site.

The protein belongs to the Nudix hydrolase family. NudK subfamily. In terms of assembly, homodimer. Requires Mg(2+) as cofactor.

The catalysed reaction is GDP-alpha-D-mannose + H2O = alpha-D-mannose 1-phosphate + GMP + 2 H(+). Functionally, nucleoside diphosphate sugar hydrolase that hydrolyzes GDP-mannose as its preferred substrate, yielding GMP and mannose-1-phosphate. The chain is GDP-mannose pyrophosphatase (nudK) from Escherichia coli (strain K12 / DH10B).